Consider the following 281-residue polypeptide: Proteasome subunit beta (281 aa).

The propeptide at 1–53 is removed in mature form; by autocatalysis; it reads MEANTRSTGRLPAAFLTPGSSSFMDFLSDHQPELLPGKRQLPPTQGVIEAPHG. The active-site Nucleophile is the Thr-54.

It belongs to the peptidase T1B family. As to quaternary structure, the 20S proteasome core is composed of 14 alpha and 14 beta subunits that assemble into four stacked heptameric rings, resulting in a barrel-shaped structure. The two inner rings, each composed of seven catalytic beta subunits, are sandwiched by two outer rings, each composed of seven alpha subunits. The catalytic chamber with the active sites is on the inside of the barrel. Has a gated structure, the ends of the cylinder being occluded by the N-termini of the alpha-subunits. Is capped by the proteasome-associated ATPase, ARC.

Its subcellular location is the cytoplasm. The catalysed reaction is Cleavage of peptide bonds with very broad specificity.. It participates in protein degradation; proteasomal Pup-dependent pathway. With respect to regulation, the formation of the proteasomal ATPase ARC-20S proteasome complex, likely via the docking of the C-termini of ARC into the intersubunit pockets in the alpha-rings, may trigger opening of the gate for substrate entry. Interconversion between the open-gate and close-gate conformations leads to a dynamic regulation of the 20S proteasome proteolysis activity. Component of the proteasome core, a large protease complex with broad specificity involved in protein degradation. The protein is Proteasome subunit beta of Streptomyces scabiei (strain 87.22).